The sequence spans 81 residues: Large ribosomal subunit protein bL31B (81 aa).

This sequence belongs to the bacterial ribosomal protein bL31 family. Type B subfamily. As to quaternary structure, part of the 50S ribosomal subunit.

The protein is Large ribosomal subunit protein bL31B of Lactococcus lactis subsp. cremoris (strain MG1363).